The chain runs to 453 residues: 5-hydroxytryptamine receptor 1 (453 aa).

Over M1–T36 the chain is Extracellular. The helical transmembrane segment at V37–V57 threads the bilayer. At C58 to F74 the chain is on the cytoplasmic side. A helical membrane pass occupies residues F75–A94. Residues L95–C110 lie on the Extracellular side of the membrane. C110 and C225 form a disulfide bridge. The chain crosses the membrane as a helical span at residues F111–Y133. Topologically, residues D134–R153 are cytoplasmic. The chain crosses the membrane as a helical span at residues A154–L175. Residues E176–H223 are Extracellular-facing. Residues V224–V244 traverse the membrane as a helical segment. The Cytoplasmic portion of the chain corresponds to P245–T301. Residues I302–A322 traverse the membrane as a helical segment. Residues A323 to E331 lie on the Extracellular side of the membrane. The chain crosses the membrane as a helical span at residues C332–G352. At T353–S453 the chain is on the cytoplasmic side. The segment at D397–K428 is disordered. Residues H403 to R412 are compositionally biased toward basic and acidic residues.

It belongs to the G-protein coupled receptor 1 family. In terms of tissue distribution, reproductive system.

The protein resides in the cell membrane. Its function is as follows. This is one of the several different receptors for 5-hydroxytryptamine (serotonin). 5-HT plays important roles in various behavioral and physiological processes in aplysia. These include feeding, locomotion, circadian rhythm, learning and memory, synaptic plasticity, and synaptic growth. This receptor is mediated by G proteins that stimulate phospholipase C. The chain is 5-hydroxytryptamine receptor 1 (5HTB1) from Aplysia californica (California sea hare).